A 231-amino-acid chain; its full sequence is Chromosome partition protein MukE (231 aa).

Residues 195-231 (MIRDGEAMPVEGSLSLKDDSDDNDRTDDTAPETGEDE) form a disordered region. Acidic residues predominate over residues 213 to 231 (DSDDNDRTDDTAPETGEDE).

This sequence belongs to the MukE family. In terms of assembly, interacts, and probably forms a ternary complex, with MukF and MukB. The complex formation is stimulated by calcium or magnesium.

It localises to the cytoplasm. It is found in the nucleoid. Its function is as follows. Involved in chromosome condensation, segregation and cell cycle progression. May participate in facilitating chromosome segregation by condensation DNA from both sides of a centrally located replisome during cell division. Probably acts via its interaction with MukB and MukF. This Pectobacterium atrosepticum (strain SCRI 1043 / ATCC BAA-672) (Erwinia carotovora subsp. atroseptica) protein is Chromosome partition protein MukE.